Here is a 92-residue protein sequence, read N- to C-terminus: Cell division topological specificity factor (92 aa).

The protein belongs to the MinE family.

In terms of biological role, prevents the cell division inhibition by proteins MinC and MinD at internal division sites while permitting inhibition at polar sites. This ensures cell division at the proper site by restricting the formation of a division septum at the midpoint of the long axis of the cell. In Symbiobacterium thermophilum (strain DSM 24528 / JCM 14929 / IAM 14863 / T), this protein is Cell division topological specificity factor.